Here is a 186-residue protein sequence, read N- to C-terminus: Dual-action ribosomal maturation protein DarP (186 aa).

It belongs to the DarP family.

The protein localises to the cytoplasm. Member of a network of 50S ribosomal subunit biogenesis factors which assembles along the 30S-50S interface, preventing incorrect 23S rRNA structures from forming. Promotes peptidyl transferase center (PTC) maturation. This chain is Dual-action ribosomal maturation protein DarP, found in Proteus mirabilis (strain HI4320).